Reading from the N-terminus, the 83-residue chain is Cytochrome b559 subunit alpha (83 aa).

Residues 21-35 (VIHSITIPSLFIAGW) form a helical membrane-spanning segment. A heme-binding site is contributed by His23.

Belongs to the PsbE/PsbF family. In terms of assembly, heterodimer of an alpha subunit and a beta subunit. PSII is composed of 1 copy each of membrane proteins PsbA, PsbB, PsbC, PsbD, PsbE, PsbF, PsbH, PsbI, PsbJ, PsbK, PsbL, PsbM, PsbT, PsbX, PsbY, PsbZ, Psb30/Ycf12, at least 3 peripheral proteins of the oxygen-evolving complex and a large number of cofactors. It forms dimeric complexes. It depends on heme b as a cofactor.

The protein localises to the plastid. The protein resides in the chloroplast thylakoid membrane. This b-type cytochrome is tightly associated with the reaction center of photosystem II (PSII). PSII is a light-driven water:plastoquinone oxidoreductase that uses light energy to abstract electrons from H(2)O, generating O(2) and a proton gradient subsequently used for ATP formation. It consists of a core antenna complex that captures photons, and an electron transfer chain that converts photonic excitation into a charge separation. This Chara vulgaris (Common stonewort) protein is Cytochrome b559 subunit alpha.